A 697-amino-acid polypeptide reads, in one-letter code: Elongation factor G (697 aa).

The tr-type G domain maps to 8–282; sequence EDYRNIGIMA…AVVDYLPSPL (275 aa). Residues 17 to 24, 81 to 85, and 135 to 138 each bind GTP; these read AHIDAGKT, DTPGH, and NKMD.

It belongs to the TRAFAC class translation factor GTPase superfamily. Classic translation factor GTPase family. EF-G/EF-2 subfamily.

It localises to the cytoplasm. In terms of biological role, catalyzes the GTP-dependent ribosomal translocation step during translation elongation. During this step, the ribosome changes from the pre-translocational (PRE) to the post-translocational (POST) state as the newly formed A-site-bound peptidyl-tRNA and P-site-bound deacylated tRNA move to the P and E sites, respectively. Catalyzes the coordinated movement of the two tRNA molecules, the mRNA and conformational changes in the ribosome. This is Elongation factor G from Mycoplasmopsis agalactiae (strain NCTC 10123 / CIP 59.7 / PG2) (Mycoplasma agalactiae).